The sequence spans 621 residues: DnaJ homolog subfamily C member 2 (621 aa).

Position 1 is an N-acetylmethionine (Met-1). Residues Ser-47, Ser-49, Ser-60, and Ser-63 each carry the phosphoserine modification. In terms of domain architecture, J spans 88–161 (DHYAVLGLGH…VKRRAFNSVD (74 aa)). Positions 160-250 (VDPTFDNSVP…RDERKWIEKQ (91 aa)) are ZRF1-UBD. Ser-183 bears the Phosphoserine mark. Disordered regions lie at residues 287–312 (GKAK…KEKQ) and 426–453 (KEEA…GSKN). SANT domains lie at 449–511 (SGSK…KLDP) and 549–604 (IDSI…EMVK).

Component of ribosome-associated complex (RAC), a heterodimer composed of Hsp70/DnaK-type chaperone HSPA14 and Hsp40/DnaJ-type chaperone DNAJC2. Interacts (via ZRF1-UBD region) with ID1. Post-translationally, phosphorylated in M (mitotic) phase.

It is found in the nucleus. Its subcellular location is the cytoplasm. The protein resides in the cytosol. Its function is as follows. Acts both as a chaperone in the cytosol and as a chromatin regulator in the nucleus. When cytosolic, acts as a molecular chaperone: component of the ribosome-associated complex (RAC), a complex involved in folding or maintaining nascent polypeptides in a folding-competent state. In the RAC complex, stimulates the ATPase activity of the ribosome-associated pool of Hsp70-type chaperones HSPA14 that bind to the nascent polypeptide chain. When nuclear, mediates the switching from polycomb-repressed genes to an active state: specifically recruited at histone H2A ubiquitinated at 'Lys-119' (H2AK119ub), and promotes the displacement of the polycomb PRC1 complex from chromatin, thereby facilitating transcription activation. This Rattus norvegicus (Rat) protein is DnaJ homolog subfamily C member 2 (Dnajc2).